The sequence spans 256 residues: Isoprenyl transferase (256 aa).

Asp-33 is a catalytic residue. Mg(2+) is bound at residue Asp-33. Substrate is bound by residues 34–37, Trp-38, Arg-46, His-50, and 78–80; these read GNGR and STE. Asn-81 (proton acceptor) is an active-site residue. Residues Trp-82, Arg-84, Arg-201, and 207–209 each bind substrate; that span reads RIS. Glu-220 contributes to the Mg(2+) binding site.

Belongs to the UPP synthase family. Homodimer. Mg(2+) is required as a cofactor.

Catalyzes the condensation of isopentenyl diphosphate (IPP) with allylic pyrophosphates generating different type of terpenoids. The chain is Isoprenyl transferase from Staphylococcus aureus (strain Mu50 / ATCC 700699).